Reading from the N-terminus, the 89-residue chain is Teretoxin Tan6.8 (89 aa).

A signal peptide spans 1-21 (MRLLLILLLLTPVILAGSLDE). Residues 22–42 (EPNNADGANAASFTADQEGRH) form a disordered region. Residues 22–44 (EPNNADGANAASFTADQEGRHKR) constitute a propeptide that is removed on maturation.

In terms of processing, contains 3 disulfide bonds. Expressed by the venom duct.

The protein localises to the secreted. The sequence is that of Teretoxin Tan6.8 from Terebra anilis (Auger snail).